The primary structure comprises 288 residues: ATP synthase gamma chain (288 aa).

This sequence belongs to the ATPase gamma chain family. In terms of assembly, F-type ATPases have 2 components, CF(1) - the catalytic core - and CF(0) - the membrane proton channel. CF(1) has five subunits: alpha(3), beta(3), gamma(1), delta(1), epsilon(1). CF(0) has three main subunits: a, b and c.

The protein resides in the cell membrane. Produces ATP from ADP in the presence of a proton gradient across the membrane. The gamma chain is believed to be important in regulating ATPase activity and the flow of protons through the CF(0) complex. The sequence is that of ATP synthase gamma chain from Staphylococcus saprophyticus subsp. saprophyticus (strain ATCC 15305 / DSM 20229 / NCIMB 8711 / NCTC 7292 / S-41).